Consider the following 260-residue polypeptide: Histidinol-phosphatase (260 aa).

4 residues coordinate Mg(2+): Glu-67, Asp-83, Ile-85, and Asp-86. Glu-67 lines the substrate pocket. Substrate contacts are provided by residues Ile-85–Thr-88, Arg-185, and Asp-213. Asp-213 is a Mg(2+) binding site.

This sequence belongs to the inositol monophosphatase superfamily. It depends on Mg(2+) as a cofactor.

The enzyme catalyses L-histidinol phosphate + H2O = L-histidinol + phosphate. It participates in amino-acid biosynthesis; L-histidine biosynthesis; L-histidine from 5-phospho-alpha-D-ribose 1-diphosphate: step 8/9. Catalyzes the dephosphorylation of histidinol-phosphate to histidinol, the direct precursor of histidine. The chain is Histidinol-phosphatase (hisN) from Mycobacterium tuberculosis (strain ATCC 25618 / H37Rv).